The sequence spans 451 residues: POU domain, class 3, transcription factor 1 (451 aa).

Disordered stretches follow at residues 1-21 (MATT…GTGP), 69-114 (AHPQ…GFHA), 134-154 (AHHL…HQPQ), 186-253 (GLHH…PSSD), and 395-451 (KRMT…GSVQ). Gly residues-rich tracts occupy residues 11 to 20 (GPGGGAGGTG), 76 to 85 (TGGGGGGDWA), and 95 to 112 (AGGG…GGGF). Residues 134 to 145 (AHHLGPAMSPSP) are compositionally biased toward low complexity. The segment covering 190-199 (ALHEDGHEAQ) has biased composition (basic and acidic residues). Residues 220 to 232 (AGGLHAAAAHLHP) are compositionally biased toward low complexity. A POU-specific domain is found at 247-321 (EDAPSSDDLE…LLNKWLEETD (75 aa)). Positions 339–398 (KRKKRTSIEVGVKGALESHFLKCPKPSAHEITGLADSLQLEKEVVRVWFCNRRQKEKRMT) form a DNA-binding region, homeobox. Pro residues predominate over residues 427 to 436 (PSAPPPPPPA).

This sequence belongs to the POU transcription factor family. Class-3 subfamily. In terms of tissue distribution, neural tissues and testis.

It is found in the nucleus. Functionally, transcription factor that binds to the octamer motif (5'-ATTTGCAT-3'). Acts as a transcriptional activator when binding cooperatively with SOX4, SOX11, or SOX12 to gene promoters. Acts as a transcriptional repressor of myelin-specific genes. This chain is POU domain, class 3, transcription factor 1 (Pou3f1), found in Rattus norvegicus (Rat).